The chain runs to 316 residues: tRNA uridine(34) hydroxylase (316 aa).

Residues 123–217 (LSDDTVVIDA…YGKDPETKGE (95 aa)) enclose the Rhodanese domain. Residue C177 is the Cysteine persulfide intermediate of the active site.

Belongs to the TrhO family.

It carries out the reaction uridine(34) in tRNA + AH2 + O2 = 5-hydroxyuridine(34) in tRNA + A + H2O. Functionally, catalyzes oxygen-dependent 5-hydroxyuridine (ho5U) modification at position 34 in tRNAs. The polypeptide is tRNA uridine(34) hydroxylase (Staphylococcus saprophyticus subsp. saprophyticus (strain ATCC 15305 / DSM 20229 / NCIMB 8711 / NCTC 7292 / S-41)).